The primary structure comprises 372 residues: Uroporphyrinogen decarboxylase (372 aa).

Residues 35–39, aspartate 85, tyrosine 166, serine 221, and histidine 342 each bind substrate; that span reads RQAGR.

This sequence belongs to the uroporphyrinogen decarboxylase family. As to quaternary structure, homodimer.

It is found in the cytoplasm. It carries out the reaction uroporphyrinogen III + 4 H(+) = coproporphyrinogen III + 4 CO2. It functions in the pathway porphyrin-containing compound metabolism; protoporphyrin-IX biosynthesis; coproporphyrinogen-III from 5-aminolevulinate: step 4/4. Functionally, catalyzes the decarboxylation of four acetate groups of uroporphyrinogen-III to yield coproporphyrinogen-III. The chain is Uroporphyrinogen decarboxylase from Methylibium petroleiphilum (strain ATCC BAA-1232 / LMG 22953 / PM1).